The sequence spans 108 residues: Large ribosomal subunit protein eL36x (108 aa).

Disordered regions lie at residues 13 to 34 (GHVV…KTSK) and 75 to 108 (KLGT…EKKK). The segment covering 75 to 84 (KLGTHKRAKR) has biased composition (basic residues).

This sequence belongs to the eukaryotic ribosomal protein eL36 family.

In Arabidopsis thaliana (Mouse-ear cress), this protein is Large ribosomal subunit protein eL36x (RPL36C).